Reading from the N-terminus, the 359-residue chain is 3-dehydroquinate synthase (359 aa).

NAD(+) contacts are provided by residues 69-74, 103-107, 127-128, Lys-140, Lys-149, and 167-170; these read DGEAYK, GVIGD, TT, and CLKT. Zn(2+) contacts are provided by Glu-182, His-245, and His-262.

Belongs to the sugar phosphate cyclases superfamily. Dehydroquinate synthase family. The cofactor is Co(2+). Zn(2+) serves as cofactor. NAD(+) is required as a cofactor.

It localises to the cytoplasm. It carries out the reaction 7-phospho-2-dehydro-3-deoxy-D-arabino-heptonate = 3-dehydroquinate + phosphate. Its pathway is metabolic intermediate biosynthesis; chorismate biosynthesis; chorismate from D-erythrose 4-phosphate and phosphoenolpyruvate: step 2/7. Its function is as follows. Catalyzes the conversion of 3-deoxy-D-arabino-heptulosonate 7-phosphate (DAHP) to dehydroquinate (DHQ). The polypeptide is 3-dehydroquinate synthase (Aeromonas salmonicida (strain A449)).